Here is a 490-residue protein sequence, read N- to C-terminus: Ketol-acid reductoisomerase (NADP(+)) (490 aa).

The 192-residue stretch at 17–208 folds into the KARI N-terminal Rossmann domain; that stretch reads LAQCEFMNAD…GGHRAGVLKS (192 aa). Residues 45–48, R68, R76, S78, and 108–110 each bind NADP(+); these read CGAQ and DKQ. H132 is an active-site residue. NADP(+) is bound at residue G158. KARI C-terminal knotted domains are found at residues 209 to 353 and 355 to 486; these read SFIA…AEQE and FDNG…MSAM. The Mg(2+) site is built by D217, E221, E389, and E393. S414 provides a ligand contact to substrate.

Belongs to the ketol-acid reductoisomerase family. Requires Mg(2+) as cofactor.

It catalyses the reaction (2R)-2,3-dihydroxy-3-methylbutanoate + NADP(+) = (2S)-2-acetolactate + NADPH + H(+). It carries out the reaction (2R,3R)-2,3-dihydroxy-3-methylpentanoate + NADP(+) = (S)-2-ethyl-2-hydroxy-3-oxobutanoate + NADPH + H(+). It functions in the pathway amino-acid biosynthesis; L-isoleucine biosynthesis; L-isoleucine from 2-oxobutanoate: step 2/4. The protein operates within amino-acid biosynthesis; L-valine biosynthesis; L-valine from pyruvate: step 2/4. Involved in the biosynthesis of branched-chain amino acids (BCAA). Catalyzes an alkyl-migration followed by a ketol-acid reduction of (S)-2-acetolactate (S2AL) to yield (R)-2,3-dihydroxy-isovalerate. In the isomerase reaction, S2AL is rearranged via a Mg-dependent methyl migration to produce 3-hydroxy-3-methyl-2-ketobutyrate (HMKB). In the reductase reaction, this 2-ketoacid undergoes a metal-dependent reduction by NADPH to yield (R)-2,3-dihydroxy-isovalerate. The chain is Ketol-acid reductoisomerase (NADP(+)) from Pseudoalteromonas translucida (strain TAC 125).